Consider the following 359-residue polypeptide: MTQQIQVDLGERSYPIYIGQSLMSDSETLSRYLLKKRILIVTNETVAPLYLKQIQDTMASFGEVSSVILPDGEQFKDLTHLDSIFTALLQRNYARDSVLVALGGGVIGDMTGFAAACYQRGVDFIQIPTTLLSQVDSSVGGKTAVNHPLGKNMIGAFYQPQIVIIDTECLQTLPAREFAAGMAEVIKYGIMWDAEFFQWLENNVQALKSLDTQALVYAISRCCEIKADVVSQDETEQGVRALLNLGHTFGHAIEAEMGYGNWLHGEAVAAGTVLAAQTAKSMGLIDESIVRRIVQLFHAFDLPITAPESMDFDSFIKHMRRDKKVLGGQIRLVLPTAIGRADVFSQVPESTLEQVICCA.

NAD(+)-binding positions include 71-76 (DGEQFK), 105-109 (GVIGD), 129-130 (TT), K142, K151, and 169-172 (CLQT). Residues E184, H247, and H264 each contribute to the Zn(2+) site.

Belongs to the sugar phosphate cyclases superfamily. Dehydroquinate synthase family. Co(2+) is required as a cofactor. The cofactor is Zn(2+). It depends on NAD(+) as a cofactor.

It is found in the cytoplasm. It carries out the reaction 7-phospho-2-dehydro-3-deoxy-D-arabino-heptonate = 3-dehydroquinate + phosphate. It functions in the pathway metabolic intermediate biosynthesis; chorismate biosynthesis; chorismate from D-erythrose 4-phosphate and phosphoenolpyruvate: step 2/7. In terms of biological role, catalyzes the conversion of 3-deoxy-D-arabino-heptulosonate 7-phosphate (DAHP) to dehydroquinate (DHQ). The chain is 3-dehydroquinate synthase from Shewanella sp. (strain MR-4).